The primary structure comprises 647 residues: A-type voltage-gated potassium channel KCND1 (647 aa).

Topologically, residues 1–183 (MAAGVATWLP…RAFENPHTST (183 aa)) are cytoplasmic. The segment at 2-20 (AAGVATWLPFARAAAVGWL) is interaction with KCNIP1, KCNIP2, and other family members. Zn(2+) is bound by residues H104, C131, and C132. Residues 144–164 (AQRLAEDEEAEQTGDGPALPA) are disordered. Residues 184-205 (AALVFYYVTGFFIAVSVIANVV) traverse the membrane as a helical segment. The Extracellular segment spans residues 206–230 (ETIPCRGPARRPPREQPCGDRFPLA). Residues 231-252 (FFCMDTACVLIFTGEYLLRLFA) form a helical membrane-spanning segment. The Cytoplasmic segment spans residues 253–263 (APSRCRFLRSV). A helical membrane pass occupies residues 264 to 284 (MSLIDVVAILPYYIGLLVPKN). At 285 to 287 (EDV) the chain is on the extracellular side. Residues 288-308 (SGAFVTLRVFRVFRIFKFSRH) form a helical; Voltage-sensor membrane-spanning segment. The Cytoplasmic portion of the chain corresponds to 309–323 (SQGLRILGYTLKSCA). The S4-S5 linker stretch occupies residues 310-323 (QGLRILGYTLKSCA). A helical membrane pass occupies residues 324-345 (SELGFLLFSLTMAIIIFATVMF). Topologically, residues 346–359 (YAEKGTSKTNFTSI) are extracellular. Residues 360–371 (PAAFWYTIVTMT) constitute an intramembrane region (helical). The Selectivity filter signature appears at 372-377 (TLGYGD). An intramembrane segment occupies 372–379 (TLGYGDMV). Residues 380 to 386 (PSTIAGK) are Extracellular-facing. Residues 387-415 (IFGSICSLSGVLVIALPVPVIVSNFSRIY) traverse the membrane as a helical segment. Topologically, residues 416–647 (HQNQRADKRR…LPETVKISSL (232 aa)) are cytoplasmic. The required for dendritic targeting stretch occupies residues 474–489 (FEQQHHHLLHCLEKTT). A compositionally biased stretch (low complexity) spans 510–520 (GRTSRSTSVSS). A disordered region spans residues 510 to 531 (GRTSRSTSVSSQPVGPSSLLSS). Residues 521-530 (QPVGPSSLLS) show a composition bias toward polar residues. The residue at position 555 (S555) is a Phosphoserine. Disordered regions lie at residues 564–584 (GLRR…PHDS) and 601–634 (IPTP…RLGT).

Belongs to the potassium channel family. D (Shal) (TC 1.A.1.2) subfamily. Kv4.1/KCND1 sub-subfamily. In terms of assembly, component of heteromultimeric potassium channels. Identified in potassium channel complexes containing KCND1, KCND2, KCND3, KCNIP1, KCNIP2, KCNIP3, KCNIP4, DPP6 and DPP10. In terms of tissue distribution, detected in carotid body chemoreceptor cells and in frontal cortex.

Its subcellular location is the cell membrane. It carries out the reaction K(+)(in) = K(+)(out). In terms of biological role, A-type voltage-gated potassium channel that mediates transmembrane potassium transport in excitable membranes in the brain. Mediates A-type current I(SA) in suprachiasmatic nucleus (SCN) neurons. Exhibits a low-threshold A-type current with a hyperpolarized steady-state inactivation midpoint and the recovery process was steeply voltage-dependent, with recovery being markedly faster at more negative potentials. May regulates repetitive firing rates in the suprachiasmatic nucleus (SCN) neurons and circadian rhythms in neuronal excitability and behavior. Contributes to the regulation of the circadian rhythm of action potential firing in suprachiasmatic nucleus neurons, which regulates the circadian rhythm of locomotor activity. The regulatory subunit KCNIP1 modulates the kinetics of channel inactivation, increases the current amplitudes and accelerates recovery from inactivation, shifts activation in a depolarizing direction. The regulatory subunit DPP10 decreases the voltage sensitivity of the inactivation channel gating. This chain is A-type voltage-gated potassium channel KCND1, found in Oryctolagus cuniculus (Rabbit).